The sequence spans 253 residues: Proteasome subunit alpha (253 aa).

A disordered region spans residues 229–253; that stretch reads ADESQSYIDDIEDAADDSDDDDDEE. Over residues 237 to 253 the composition is skewed to acidic residues; sequence DDIEDAADDSDDDDDEE.

Belongs to the peptidase T1A family. In terms of assembly, the 20S proteasome core is composed of 14 alpha and 14 beta subunits that assemble into four stacked heptameric rings, resulting in a barrel-shaped structure. The two inner rings, each composed of seven catalytic beta subunits, are sandwiched by two outer rings, each composed of seven alpha subunits. The catalytic chamber with the active sites is on the inside of the barrel. Has a gated structure, the ends of the cylinder being occluded by the N-termini of the alpha-subunits. Is capped at one or both ends by the proteasome regulatory ATPase, PAN.

It localises to the cytoplasm. With respect to regulation, the formation of the proteasomal ATPase PAN-20S proteasome complex, via the docking of the C-termini of PAN into the intersubunit pockets in the alpha-rings, triggers opening of the gate for substrate entry. Interconversion between the open-gate and close-gate conformations leads to a dynamic regulation of the 20S proteasome proteolysis activity. In terms of biological role, component of the proteasome core, a large protease complex with broad specificity involved in protein degradation. The protein is Proteasome subunit alpha of Halobacterium salinarum (strain ATCC 29341 / DSM 671 / R1).